Consider the following 473-residue polypeptide: Photosystem II CP43 reaction center protein (473 aa).

Positions 1–14 are excised as a propeptide; it reads MKILYSQRRFYPVE. Threonine 15 bears the N-acetylthreonine mark. Threonine 15 is modified (phosphothreonine). A run of 5 helical transmembrane segments spans residues 69–93, 134–155, 178–200, 255–275, and 291–312; these read LFEV…PHLA, LIGP…KDKN, KALY…RKIT, KPFA…LSYS, and WFNN…ASQA. Glutamate 367 contacts [CaMn4O5] cluster. Residues 447–471 form a helical membrane-spanning segment; the sequence is RARAAAAGFEKGIDRDFEPVLSMTP.

It belongs to the PsbB/PsbC family. PsbC subfamily. As to quaternary structure, PSII is composed of 1 copy each of membrane proteins PsbA, PsbB, PsbC, PsbD, PsbE, PsbF, PsbH, PsbI, PsbJ, PsbK, PsbL, PsbM, PsbT, PsbX, PsbY, PsbZ, Psb30/Ycf12, at least 3 peripheral proteins of the oxygen-evolving complex and a large number of cofactors. It forms dimeric complexes. It depends on Binds multiple chlorophylls and provides some of the ligands for the Ca-4Mn-5O cluster of the oxygen-evolving complex. It may also provide a ligand for a Cl- that is required for oxygen evolution. PSII binds additional chlorophylls, carotenoids and specific lipids. as a cofactor. Phosphorylated on threonine residue(s).

Its subcellular location is the plastid. The protein localises to the chloroplast thylakoid membrane. One of the components of the core complex of photosystem II (PSII). It binds chlorophyll and helps catalyze the primary light-induced photochemical processes of PSII. PSII is a light-driven water:plastoquinone oxidoreductase, using light energy to abstract electrons from H(2)O, generating O(2) and a proton gradient subsequently used for ATP formation. The chain is Photosystem II CP43 reaction center protein from Marchantia polymorpha (Common liverwort).